The following is a 70-amino-acid chain: Large ribosomal subunit protein bL31 (70 aa).

Positions 16, 18, 37, and 40 each coordinate Zn(2+).

Belongs to the bacterial ribosomal protein bL31 family. Type A subfamily. As to quaternary structure, part of the 50S ribosomal subunit. Zn(2+) serves as cofactor.

Its function is as follows. Binds the 23S rRNA. This Desulfovibrio desulfuricans (strain ATCC 27774 / DSM 6949 / MB) protein is Large ribosomal subunit protein bL31.